The sequence spans 344 residues: S-methyl-5'-thioadenosine phosphorylase (344 aa).

Residues Thr45, 88-89 (RH), and 121-122 (SA) contribute to the phosphate site. Residue Met238 participates in substrate binding. Position 239 (Ser239) interacts with phosphate. A substrate-binding site is contributed by 262-264 (DYD).

Belongs to the PNP/MTAP phosphorylase family. MTAP subfamily. Homotrimer.

The protein localises to the cytoplasm. It is found in the nucleus. It carries out the reaction S-methyl-5'-thioadenosine + phosphate = 5-(methylsulfanyl)-alpha-D-ribose 1-phosphate + adenine. The protein operates within amino-acid biosynthesis; L-methionine biosynthesis via salvage pathway; S-methyl-5-thio-alpha-D-ribose 1-phosphate from S-methyl-5'-thioadenosine (phosphorylase route): step 1/1. Functionally, catalyzes the reversible phosphorylation of S-methyl-5'-thioadenosine (MTA) to adenine and 5-methylthioribose-1-phosphate. Involved in the breakdown of MTA, a major by-product of polyamine biosynthesis. Responsible for the first step in the methionine salvage pathway after MTA has been generated from S-adenosylmethionine. Has broad substrate specificity with 6-aminopurine nucleosides as preferred substrates. The polypeptide is S-methyl-5'-thioadenosine phosphorylase (Candida albicans (strain WO-1) (Yeast)).